A 302-amino-acid polypeptide reads, in one-letter code: Probable alpha-L-glutamate ligase (302 aa).

The 184-residue stretch at Met104–Glu287 folds into the ATP-grasp domain. Residues Lys141, Glu178–Phe179, Asp187, and Arg211–Asn213 contribute to the ATP site. 3 residues coordinate Mg(2+): Asp248, Glu260, and Asn262. Residues Asp248, Glu260, and Asn262 each coordinate Mn(2+).

It belongs to the RimK family. Requires Mg(2+) as cofactor. The cofactor is Mn(2+).

In Psychromonas ingrahamii (strain DSM 17664 / CCUG 51855 / 37), this protein is Probable alpha-L-glutamate ligase.